Consider the following 533-residue polypeptide: Probable lipid II flippase MurJ (533 aa).

A run of 14 helical transmembrane segments spans residues 11-31, 39-61, 96-116, 135-155, 166-186, 196-216, 253-273, 284-304, 330-350, 360-380, 400-420, 422-442, 452-472, and 493-513; these read LANI…FGLL, AFGV…FLFI, LVSG…GIFI, LQIM…FGTL, ISPL…VWQL, WLLG…LQWL, LSSG…SFIP, FVAL…FLPV, LTMF…VQVI, AAAE…FYLG, VSLF…KPFG, VGIV…FIWM, LGGW…ASVA, and ILEV…GVAL.

The protein belongs to the MurJ/MviN family.

It localises to the cell inner membrane. Its pathway is cell wall biogenesis; peptidoglycan biosynthesis. Involved in peptidoglycan biosynthesis. Transports lipid-linked peptidoglycan precursors from the inner to the outer leaflet of the cytoplasmic membrane. The polypeptide is Probable lipid II flippase MurJ (Synechocystis sp. (strain ATCC 27184 / PCC 6803 / Kazusa)).